The sequence spans 378 residues: tRNA-specific 2-thiouridylase MnmA (378 aa).

ATP-binding positions include 9 to 16 (GVSGGVDS) and Met35. The tract at residues 94–96 (NPD) is interaction with target base in tRNA. The active-site Nucleophile is Cys99. Cysteines 99 and 195 form a disulfide. Gly123 is an ATP binding site. Positions 145 to 147 (KDQ) are interaction with tRNA. Cys195 acts as the Cysteine persulfide intermediate in catalysis. The segment at 307-308 (RY) is interaction with tRNA.

This sequence belongs to the MnmA/TRMU family.

Its subcellular location is the cytoplasm. It catalyses the reaction S-sulfanyl-L-cysteinyl-[protein] + uridine(34) in tRNA + AH2 + ATP = 2-thiouridine(34) in tRNA + L-cysteinyl-[protein] + A + AMP + diphosphate + H(+). Its function is as follows. Catalyzes the 2-thiolation of uridine at the wobble position (U34) of tRNA, leading to the formation of s(2)U34. The protein is tRNA-specific 2-thiouridylase MnmA of Xanthomonas campestris pv. campestris (strain 8004).